A 254-amino-acid polypeptide reads, in one-letter code: 5-oxoprolinase subunit A (254 aa).

Belongs to the LamB/PxpA family. In terms of assembly, forms a complex composed of PxpA, PxpB and PxpC.

It catalyses the reaction 5-oxo-L-proline + ATP + 2 H2O = L-glutamate + ADP + phosphate + H(+). Its function is as follows. Catalyzes the cleavage of 5-oxoproline to form L-glutamate coupled to the hydrolysis of ATP to ADP and inorganic phosphate. The chain is 5-oxoprolinase subunit A from Gluconobacter oxydans (strain 621H) (Gluconobacter suboxydans).